Consider the following 610-residue polypeptide: UvrABC system protein C (610 aa).

A GIY-YIG domain is found at 13 to 91; that stretch reads HLPGVYRMYD…IKENQPKYNV (79 aa). Residues 201–236 enclose the UVR domain; sequence GQVVEHLVQKMENAAQELDFEAAARFRDQIQSVRAV.

It belongs to the UvrC family. As to quaternary structure, interacts with UvrB in an incision complex.

The protein localises to the cytoplasm. The UvrABC repair system catalyzes the recognition and processing of DNA lesions. UvrC both incises the 5' and 3' sides of the lesion. The N-terminal half is responsible for the 3' incision and the C-terminal half is responsible for the 5' incision. In Actinobacillus pleuropneumoniae serotype 7 (strain AP76), this protein is UvrABC system protein C.